Consider the following 78-residue polypeptide: Large ribosomal subunit protein bL28 (78 aa).

The protein belongs to the bacterial ribosomal protein bL28 family.

The polypeptide is Large ribosomal subunit protein bL28 (Acaryochloris marina (strain MBIC 11017)).